The sequence spans 108 residues: UPF0060 membrane protein YnfA (108 aa).

Residues 1 to 5 are Periplasmic-facing; sequence MIKTT. A helical membrane pass occupies residues 6-26; sequence LLFFATALCEIIGCFLPWLWL. Topologically, residues 27-30 are cytoplasmic; sequence KRNA. A helical membrane pass occupies residues 31–51; sequence SIWLLLPAGISLALFVWLLTL. At 52 to 60 the chain is on the periplasmic side; that stretch reads HPAASGRIY. The helical transmembrane segment at 61-81 threads the bilayer; the sequence is AAYGGVYVCTALMWLRVVDGV. Over 82–84 the chain is Cytoplasmic; it reads KLT. The chain crosses the membrane as a helical span at residues 85–105; the sequence is LYDWTGALIALCGMLIIVAGW. The Periplasmic segment spans residues 106-108; the sequence is GRT.

It belongs to the UPF0060 family.

It localises to the cell inner membrane. The polypeptide is UPF0060 membrane protein YnfA (Shigella dysenteriae serotype 1 (strain Sd197)).